A 931-amino-acid chain; its full sequence is Protocadherin gamma-B2 (931 aa).

Positions Met-1–Pro-30 are cleaved as a signal peptide. Cadherin domains follow at residues Val-31–Phe-133, Lys-134–Phe-242, Ser-243–Val-347, Ile-348–Phe-452, Gln-453–Val-562, and Asp-570–Leu-675. Over Val-31–Tyr-691 the chain is Extracellular. 2 N-linked (GlcNAc...) asparagine glycosylation sites follow: Asn-419 and Asn-545. A helical membrane pass occupies residues Leu-692 to Ser-712. The Cytoplasmic portion of the chain corresponds to Leu-713–Lys-931. Disordered stretches follow at residues Asp-814–Asn-840 and Ala-901–Lys-931. Positions Trp-815–Asn-840 are enriched in polar residues. A compositionally biased stretch (basic residues) spans Asn-921 to Lys-931.

It localises to the cell membrane. In terms of biological role, potential calcium-dependent cell-adhesion protein. May be involved in the establishment and maintenance of specific neuronal connections in the brain. This Homo sapiens (Human) protein is Protocadherin gamma-B2 (PCDHGB2).